The following is a 282-amino-acid chain: Small ribosomal subunit protein uS2 (282 aa).

Residues 260-282 form a disordered region; it reads KRRRSKVYKEEEREVVTNEDESR. Residues 266–282 are compositionally biased toward basic and acidic residues; it reads VYKEEEREVVTNEDESR.

It belongs to the universal ribosomal protein uS2 family.

The chain is Small ribosomal subunit protein uS2 from Wolbachia pipientis wMel.